A 618-amino-acid polypeptide reads, in one-letter code: MVAPHESQRVADSCSHLVGREIGCSRDLAGCRRCTSEGRACSYSRSGVIHRTRRRNRANQDVTRSALYSSNTTPQTISDQATGRPCEGADNTETAYDRLQQIIPSRSHQSVRVIAELLEEYTEAWQGSEAFEKLSKAPIAEFFVFSEPQTRCWLDNLNLILEKEELLIFTIPPEVYAQLASSRPQEVQDRSWLVMFYSVAIYVEHSKAQNTHRVATLSKLRRNLWLAFNDVRLLIEPSPARIQALIILATYVEEFMTPCVCWSLITKACTMLQALGIVHWRLDTATSDVRAMLFWRLNMLDKALALILCRAPAFHREMSSQIAMPTLNRLMQCRPKRTKDYPPALFEAHYLHQMHLVSCIMADVWHALYGQDTEKVQEVKERLEAWYRQAKEVIEAAALVERPLLTAKGAAAVDLGRQTLRFQYLSLVVLLTVSSRQLRSQSIGPSQEMLNLLSALGDAIPDHKGPYACLLWQYLHCPLAAFGALWGELVMKTTANPEQSLKSMEAIAHLPLYLGKLGSRHALAARLQSITARIVEQARMIVNSQEAPEALPVQDEPTNPGLPAPAAEILPIVAPNESLDPTQMQPVDDFLDDRFIMQSDPFFGTTFDWFAWGGNLEV.

A DNA-binding region (zn(2)-C6 fungal-type) is located at residues 14-41 (CSHLVGREIGCSRDLAGCRRCTSEGRAC). Residues 52–87 (TRRRNRANQDVTRSALYSSNTTPQTISDQATGRPCE) are disordered. Polar residues predominate over residues 59–81 (NQDVTRSALYSSNTTPQTISDQA).

The protein localises to the nucleus. Functionally, transcriptional regulator; part of the ergochrome gene cluster responsible for the typical purple-black color of the ergot sclerotia. The ergochrome gene cluster produces several ergot pigments including the yellow ergochrome secalonic acid and its derivatives, as well as the red anthraquinones endocrocin and clavorubin. This chain is Transcriptional regulator CPUR_05421, found in Claviceps purpurea (strain 20.1) (Ergot fungus).